We begin with the raw amino-acid sequence, 805 residues long: Probable inorganic carbon transporter subunit DabA (805 aa).

Residues Cys334, Asp336, His491, and Cys506 each contribute to the Zn(2+) site.

It belongs to the inorganic carbon transporter (TC 9.A.2) DabA family. Forms a complex with DabB. The cofactor is Zn(2+).

The protein localises to the cell inner membrane. Its function is as follows. Part of an energy-coupled inorganic carbon pump. The polypeptide is Probable inorganic carbon transporter subunit DabA (Ruegeria sp. (strain TM1040) (Silicibacter sp.)).